The sequence spans 360 residues: Phospho-N-acetylmuramoyl-pentapeptide-transferase (360 aa).

The next 10 helical transmembrane spans lie at 26–46 (AILG…KLIE), 74–94 (MGGL…GDLG), 97–117 (YVWV…IDDY), 134–154 (YILQ…TAAN), 168–188 (VMPQ…VGSS), 199–219 (GLAI…AYLS), 236–256 (SGEL…FLWF), 263–283 (VFMG…IAVL), 288–308 (ILLV…ILQV), and 338–358 (VIVR…ATLK).

Belongs to the glycosyltransferase 4 family. MraY subfamily. The cofactor is Mg(2+).

The protein localises to the cell inner membrane. The catalysed reaction is UDP-N-acetyl-alpha-D-muramoyl-L-alanyl-gamma-D-glutamyl-meso-2,6-diaminopimeloyl-D-alanyl-D-alanine + di-trans,octa-cis-undecaprenyl phosphate = di-trans,octa-cis-undecaprenyl diphospho-N-acetyl-alpha-D-muramoyl-L-alanyl-D-glutamyl-meso-2,6-diaminopimeloyl-D-alanyl-D-alanine + UMP. It participates in cell wall biogenesis; peptidoglycan biosynthesis. Its function is as follows. Catalyzes the initial step of the lipid cycle reactions in the biosynthesis of the cell wall peptidoglycan: transfers peptidoglycan precursor phospho-MurNAc-pentapeptide from UDP-MurNAc-pentapeptide onto the lipid carrier undecaprenyl phosphate, yielding undecaprenyl-pyrophosphoryl-MurNAc-pentapeptide, known as lipid I. This Shewanella putrefaciens (strain CN-32 / ATCC BAA-453) protein is Phospho-N-acetylmuramoyl-pentapeptide-transferase.